A 620-amino-acid chain; its full sequence is Glutathione-regulated potassium-efflux system protein KefC (620 aa).

12 helical membrane passes run 4–24, 26–46, 54–74, 90–110, 114–134, 149–169, 178–198, 218–238, 270–290, 294–314, 327–347, and 359–379; these read HTLI…PIAV, LGLG…PWGL, SILH…GLEL, GALQ…FLGL, VAEL…MQAM, FAVL…IPLL, MGAF…VVLL, VFSA…EEVG, GLLL…GTLL, LRIV…LWLI, WFAV…GAAQ, and SLTL…VILN. Positions 399–518 constitute an RCK N-terminal domain; it reads QPRVIIAGFG…AGVEKPERET (120 aa). The disordered stretch occupies residues 597–620; that stretch reads GWQGTEEGKHTGNMADEPETKPSS.

Belongs to the monovalent cation:proton antiporter 2 (CPA2) transporter (TC 2.A.37) family. KefC subfamily. Homodimer. Interacts with the regulatory subunit KefF.

The protein localises to the cell inner membrane. Functionally, pore-forming subunit of a potassium efflux system that confers protection against electrophiles. Catalyzes K(+)/H(+) antiport. This Escherichia fergusonii (strain ATCC 35469 / DSM 13698 / CCUG 18766 / IAM 14443 / JCM 21226 / LMG 7866 / NBRC 102419 / NCTC 12128 / CDC 0568-73) protein is Glutathione-regulated potassium-efflux system protein KefC.